Consider the following 439-residue polypeptide: MSQANAAAKNASSDVFFNASLEDIDSEIFGAIRNELGRQRHEIELIASENIVSRAVLEAQGSILTNKYAEGYPGKRYYGGCQYVDVVEELAIERAKKLFGCEFANVQPNSGSQMNQAVFLALLQPGDTFMGLDLNSGGHLTHGSPVNMSGKWFNVVSYGVRKDDHLLDMDEVARLARENKPKLILAGGTAYSRVWDWKRFREIADEVGAYLMVDMAHIAGLVAGGVHPSPVPHAHVCTTTTHKSLRGPRGGMILTNDADIAKKINSAVFPGLQGGPLMHVIAGKAVAFAEALKPEFKLYAKNVVDNARALAEELKSNGLDIVSGGTDNHLMLVDLRPKNATGKRAEAALGRANITCNKNGIPFDPEKPFVTSGVRLGTPAGTTRGFGVTEFKEIGSLIAEVLDGLKVANSDEGNAAVEQAVKEKVMALTDRFPMYGYQG.

(6S)-5,6,7,8-tetrahydrofolate is bound by residues Leu-134 and 138–140; that span reads GHL. Lys-243 bears the N6-(pyridoxal phosphate)lysine mark.

Belongs to the SHMT family. Homodimer. Pyridoxal 5'-phosphate serves as cofactor.

It is found in the cytoplasm. The enzyme catalyses (6R)-5,10-methylene-5,6,7,8-tetrahydrofolate + glycine + H2O = (6S)-5,6,7,8-tetrahydrofolate + L-serine. It participates in one-carbon metabolism; tetrahydrofolate interconversion. Its pathway is amino-acid biosynthesis; glycine biosynthesis; glycine from L-serine: step 1/1. Catalyzes the reversible interconversion of serine and glycine with tetrahydrofolate (THF) serving as the one-carbon carrier. This reaction serves as the major source of one-carbon groups required for the biosynthesis of purines, thymidylate, methionine, and other important biomolecules. Also exhibits THF-independent aldolase activity toward beta-hydroxyamino acids, producing glycine and aldehydes, via a retro-aldol mechanism. This is Serine hydroxymethyltransferase from Brucella anthropi (strain ATCC 49188 / DSM 6882 / CCUG 24695 / JCM 21032 / LMG 3331 / NBRC 15819 / NCTC 12168 / Alc 37) (Ochrobactrum anthropi).